The following is a 166-amino-acid chain: Replication restart protein DnaT (166 aa).

The protein belongs to the DnaT family. In terms of assembly, homooligomerizes. Interacts with PriB. Component of the replication restart primosome. Primosome assembly occurs via a 'hand-off' mechanism. PriA binds to replication forks, subsequently PriB then DnaT bind; DnaT then displaces ssDNA to generate the helicase loading substrate.

Its function is as follows. Involved in the restart of stalled replication forks, which reloads the replicative helicase on sites other than the origin of replication. Can function in multiple replication restart pathways. Displaces ssDNA from a PriB-ssDNA complex. Probably forms a spiral filament on ssDNA. In Buchnera aphidicola subsp. Schizaphis graminum (strain Sg), this protein is Replication restart protein DnaT.